The following is an 899-amino-acid chain: Translation initiation factor IF-2 (899 aa).

Disordered regions lie at residues 94–167 and 259–309; these read TFTK…VVVK and FNQE…HGFE. The span at 107–121 shows a compositional bias: basic and acidic residues; it reads AKARQETEERTRPQE. Over residues 147–164 the composition is skewed to low complexity; sequence RAAQQKETAKTTSTTTEV. One can recognise a tr-type G domain in the interval 399 to 568; the sequence is TRPPVVTIMG…LIQSELMELK (170 aa). A G1 region spans residues 408–415; that stretch reads GHVDHGKT. 408 to 415 provides a ligand contact to GTP; that stretch reads GHVDHGKT. The tract at residues 433 to 437 is G2; that stretch reads GITQH. Positions 454-457 are G3; sequence DTPG. Residues 454-458 and 508-511 each bind GTP; these read DTPGH and NKMD. The interval 508–511 is G4; the sequence is NKMD. Residues 544-546 form a G5 region; it reads SAH.

It belongs to the TRAFAC class translation factor GTPase superfamily. Classic translation factor GTPase family. IF-2 subfamily.

Its subcellular location is the cytoplasm. One of the essential components for the initiation of protein synthesis. Protects formylmethionyl-tRNA from spontaneous hydrolysis and promotes its binding to the 30S ribosomal subunits. Also involved in the hydrolysis of GTP during the formation of the 70S ribosomal complex. In Acinetobacter baylyi (strain ATCC 33305 / BD413 / ADP1), this protein is Translation initiation factor IF-2.